A 750-amino-acid polypeptide reads, in one-letter code: Photosystem I P700 chlorophyll a apoprotein A1 (750 aa).

Helical transmembrane passes span 70-93 (VFSA…FHGA), 156-179 (LYCT…FHYH), 195-219 (LNHH…HVSL), 291-309 (IAHH…GHMY), 346-369 (WHAQ…HHMY), 385-411 (LSLF…IFMV), 433-455 (AIIS…LYIH), and 531-549 (FLVH…LILL). [4Fe-4S] cluster-binding residues include cysteine 573 and cysteine 582. Helical transmembrane passes span 589-610 (HVFL…HFSW) and 664-686 (LSAY…MFLF). Residue histidine 675 participates in chlorophyll a' binding. Methionine 683 and tyrosine 691 together coordinate chlorophyll a. Tryptophan 692 lines the phylloquinone pocket. A helical transmembrane segment spans residues 724–744 (AVGVTHYLLGGIATTWAFFLA).

The protein belongs to the PsaA/PsaB family. As to quaternary structure, the PsaA/B heterodimer binds the P700 chlorophyll special pair and subsequent electron acceptors. PSI consists of a core antenna complex that captures photons, and an electron transfer chain that converts photonic excitation into a charge separation. The eukaryotic PSI reaction center is composed of at least 11 subunits. It depends on P700 is a chlorophyll a/chlorophyll a' dimer, A0 is one or more chlorophyll a, A1 is one or both phylloquinones and FX is a shared 4Fe-4S iron-sulfur center. as a cofactor.

The protein localises to the plastid. It localises to the chloroplast thylakoid membrane. It catalyses the reaction reduced [plastocyanin] + hnu + oxidized [2Fe-2S]-[ferredoxin] = oxidized [plastocyanin] + reduced [2Fe-2S]-[ferredoxin]. In terms of biological role, psaA and PsaB bind P700, the primary electron donor of photosystem I (PSI), as well as the electron acceptors A0, A1 and FX. PSI is a plastocyanin-ferredoxin oxidoreductase, converting photonic excitation into a charge separation, which transfers an electron from the donor P700 chlorophyll pair to the spectroscopically characterized acceptors A0, A1, FX, FA and FB in turn. Oxidized P700 is reduced on the lumenal side of the thylakoid membrane by plastocyanin. In Eucalyptus globulus subsp. globulus (Tasmanian blue gum), this protein is Photosystem I P700 chlorophyll a apoprotein A1.